The primary structure comprises 819 residues: Ribosome-releasing factor 2, mitochondrial (819 aa).

The transit peptide at 1-30 directs the protein to the mitochondrion; it reads MWKWNVRRWAGARVNISKNRLSVINVGSRY. The tr-type G domain occupies 39-327; that stretch reads SKVRNIGIIA…AIVNYLPSPI (289 aa). GTP contacts are provided by residues 48–55, 113–117, and 165–168; these read AHIDAGKT, DTPGH, and NKMD.

This sequence belongs to the TRAFAC class translation factor GTPase superfamily. Classic translation factor GTPase family. EF-G/EF-2 subfamily.

It localises to the mitochondrion. Its function is as follows. Mitochondrial GTPase that mediates the disassembly of ribosomes from messenger RNA at the termination of mitochondrial protein biosynthesis. Not involved in the GTP-dependent ribosomal translocation step during translation elongation. The polypeptide is Ribosome-releasing factor 2, mitochondrial (Saccharomyces cerevisiae (strain RM11-1a) (Baker's yeast)).